A 558-amino-acid chain; its full sequence is N-acetylglucosamine-6-O-sulfatase (558 aa).

Ser-101 is modified (3-oxoalanine (Ser)).

The protein belongs to the sulfatase family. Post-translationally, the conversion to 3-oxoalanine (also known as C-formylglycine, FGly), of a serine or cysteine residue in prokaryotes and of a cysteine residue in eukaryotes, is critical for catalytic activity.

Functionally, exosulfatase involved in the degradation of the glycosaminoglycan (GAG) heparan sulfate (HS). Catalyzes the hydrolysis of the 6-sulfate groups of the N-acetyl-D-glucosamine 6-sulfate units. GAG-specific sulfatases play a key role in the persistence of the major human gut symbiont B.thetaiotaomicron in the host gastrointestinal tract. In Bacteroides thetaiotaomicron (strain ATCC 29148 / DSM 2079 / JCM 5827 / CCUG 10774 / NCTC 10582 / VPI-5482 / E50), this protein is N-acetylglucosamine-6-O-sulfatase.